A 388-amino-acid chain; its full sequence is F-box protein At5g42460 (388 aa).

The F-box domain occupies M1–Q47.

The chain is F-box protein At5g42460 from Arabidopsis thaliana (Mouse-ear cress).